A 209-amino-acid polypeptide reads, in one-letter code: MTQARTKKNPPLRVGVGGPVGSGKTTLLEMLCKAMRDRYDLVAITNDIYTKEDQRLLTISGALPAERIMGVETGGCPHTAIREDASINLEAVERMLAKFPDADVVFIESGGDNLAATFSPELSDLTIYVIDVAGGEKIPRKGGPGITKSDLLVINKTDLAPYVGASLEVMESDARKMRGGRPFVMGSVKSGQGLDEVIRFIEQQGMLGV.

18-25 (GPVGSGKT) serves as a coordination point for GTP.

The protein belongs to the SIMIBI class G3E GTPase family. UreG subfamily. Homodimer. UreD, UreF and UreG form a complex that acts as a GTP-hydrolysis-dependent molecular chaperone, activating the urease apoprotein by helping to assemble the nickel containing metallocenter of UreC. The UreE protein probably delivers the nickel.

It is found in the cytoplasm. Facilitates the functional incorporation of the urease nickel metallocenter. This process requires GTP hydrolysis, probably effectuated by UreG. This chain is Urease accessory protein UreG, found in Cupriavidus pinatubonensis (strain JMP 134 / LMG 1197) (Cupriavidus necator (strain JMP 134)).